Consider the following 966-residue polypeptide: Envelope glycoprotein (966 aa).

The signal sequence occupies residues 1 to 83; the sequence is MDAGARYMRL…LLGINMCVSA (83 aa). Residues 84–801 lie on the Extracellular side of the membrane; sequence EDYITLISDP…SLKDVFDWSG (718 aa). Residues asparagine 101, asparagine 134, asparagine 179, asparagine 220, asparagine 231, asparagine 334, asparagine 351, asparagine 357, asparagine 382, asparagine 403, asparagine 407, asparagine 438, asparagine 443, asparagine 449, asparagine 459, asparagine 469, asparagine 483, asparagine 495, asparagine 505, asparagine 511, asparagine 529, and asparagine 536 are each glycosylated (N-linked (GlcNAc...) asparagine; by host). The fusion peptide stretch occupies residues 633-653; the sequence is GVGLVIMLVIMAIVAAAGASL. Coiled-coil stretches lie at residues 665 to 715 and 756 to 791; these read KAAV…RIML and RGLQ…EVWE. Residues 699-715 form an immunosuppression region; the sequence is LEARVARVEAITDRIML. A helical membrane pass occupies residues 802 to 822; it reads WFSWLKYIPIIVVGLLGCILI. Topologically, residues 823–966 are cytoplasmic; the sequence is RAVICVCQPL…LWCYKKSKSL (144 aa).

As to quaternary structure, the mature envelope protein (Env) consists of a trimer of SU-TM heterodimers attached by noncovalent interactions or by a labile interchain disulfide bond. Specific enzymatic cleavages in vivo yield mature proteins. Envelope glycoproteins are synthesized as an inactive precursor that is N-glycosylated and processed likely by host cell furin or by a furin-like protease in the Golgi to yield the mature SU and TM proteins. The cleavage site between SU and TM requires the minimal sequence [KR]-X-[KR]-R.

It is found in the virion membrane. The protein resides in the host cell membrane. The surface protein (SU) attaches the virus to the host cell by binding to its receptor. This interaction triggers the refolding of the transmembrane protein (TM) and is thought to activate its fusogenic potential by unmasking its fusion peptide. Fusion occurs at the host cell plasma membrane. Its function is as follows. The transmembrane protein (TM) acts as a class I viral fusion protein. Under the current model, the protein has at least 3 conformational states: pre-fusion native state, pre-hairpin intermediate state, and post-fusion hairpin state. During viral and target cell membrane fusion, the coiled coil regions (heptad repeats) assume a trimer-of-hairpins structure, positioning the fusion peptide in close proximity to the C-terminal region of the ectodomain. The formation of this structure appears to drive apposition and subsequent fusion of viral and target cell membranes. Membranes fusion leads to delivery of the nucleocapsid into the cytoplasm. This is Envelope glycoprotein (env) from Caprine arthritis encephalitis virus (strain Cork) (CAEV-Co).